We begin with the raw amino-acid sequence, 281 residues long: Nuclear receptor-interacting protein 2 (281 aa).

Positions 18–85 are disordered; the sequence is ESCSTGQRQA…RAHLSQQRRL (68 aa). The segment covering 36 to 47 has biased composition (pro residues); it reads TPPPSSPWPTPP. Basic and acidic residues predominate over residues 55 to 78; it reads QEARRDEGEARTRGQEAQLRDRAH. The LXXLL motif motif lies at 244–248; sequence LQTLL.

In terms of assembly, interacts with NR1F2, RARA and THRB in a ligand-dependent manner.

Its subcellular location is the nucleus. In terms of biological role, down-regulates transcriptional activation by nuclear receptors such as NR1F2. The protein is Nuclear receptor-interacting protein 2 (NRIP2) of Homo sapiens (Human).